The following is a 2772-amino-acid chain: Protein DDB_G0276689 (2772 aa).

Disordered regions lie at residues 50-82 (QQLK…NNNN), 371-415 (NLET…NGKS), 475-514 (LDIN…KNNL), 612-650 (NKNN…NNNE), 685-708 (LRGS…DSSL), and 933-982 (LVNN…NNSN). 4 stretches are compositionally biased toward low complexity: residues 376-412 (NNNN…NNNN), 478-514 (NSKN…KNNL), 614-649 (NNNN…NNNN), and 688-708 (SFSP…DSSL). Residues 1065 to 1089 (LSKWILNLDDNNYNHIPFMSLVLMP) form an LRR 1 repeat. The segment at 1282-1319 (NNNNIDNNNNNNNNNNNNNNNNNNNNNNNNNNNNNNNN) is disordered. 2 LRR repeats span residues 1393 to 1416 (LSNL…TPKN) and 1543 to 1567 (HKDV…SFSN). Low complexity predominate over residues 1587 to 1619 (QNNNYNNNNYNNNYNNNNNNNNNNNNNNNNNNN). The interval 1587–1622 (QNNNYNNNNYNNNYNNNNNNNNNNNNNNNNNNNIDN) is disordered. One copy of the LRR 4 repeat lies at 1899 to 1922 (LEELTKQEIGYQVLLVLPTDLQVE). Polar residues-rich tracts occupy residues 1999 to 2011 (YVSN…NDQI) and 2073 to 2083 (LNIVHSTSPNS). Disordered regions lie at residues 1999-2021 (YVSN…KDKK), 2054-2083 (EISN…SPNS), and 2367-2386 (NNSS…NNNN). Residues 2414-2439 (TTIINNIEMDKNRLDEAIYYLKKYGN) form an LRR 5 repeat.

This chain is Protein DDB_G0276689, found in Dictyostelium discoideum (Social amoeba).